Reading from the N-terminus, the 1087-residue chain is MPAMRGLLAPQNTFLDTIATRFDGTHSNFVLGNAQVAGLFPVVYCSDGFCDLTGFSRAEVMQRGCACSFLYGPDTSELVRQQIRKALDEHKEFKAELILYRKSGLPFWCLLDVIPIKNEKGEVALFLVSHKDISETKNRGGPDNWKERGGGRRRYGRAGSKGFNANRRRSRAVLYHLSGHLQKQPKGKHKLNKGVFGEKPNLPEYKVAAIRKSPFILLHCGALRATWDGFILLATLYVAVTVPYSVCVSTAREPSAARGPPSVCDLAVEVLFILDIVLNFRTTFVSKSGQVVFAPKSICLHYVTTWFLLDVIAALPFDLLHAFKVNVYVGAHLLKTVRLLRLLRLLPRLDRYSQYSAVVLTLLMAVFALLAHWVACVWFYIGQQEIENSESELPEIGWLQELARRLETPYYLVSRSPDGGNSSGQSENCSSSGGGSEANGTGLELLGGPSLRSAYITSLYFALSSLTSVGFGNVSANTDTEKIFSICTMLIGALMHAVVFGNVTAIIQRMYARRFLYHSRTRDLRDYIRIHRIPKPLKQRMLEYFQATWAVNNGIDTTELLQSLPDELRADIAMHLHKEVLQLPLFEAASRGCLRALSLALRPAFCTPGEYLIHQGDALQALYFVCSGSMEVLKGGTVLAILGKGDLIGCELPQREQVVKANADVKGLTYCVLQCLQLAGLHESLALYPEFAPRFSRGLRGELSYNLGAGGVSAEVDTSSLSGDNTLMSTLEEKETDGEQGHTISPAPADEPSSPLLSPGCTSSSSAAKLLSPRRTAPRPRLGGRGRPSRAGVLKPEAGPSAHPRTLDGLQLPPMPWNVPPDLSPRVVDGIEDGCGSDQHKFSFRVGQSGPECSSSPSPGTESGLLTVPLVPSEARNTDTLDKLRQAVTELSEQVLQMREGLQSLRQAVQLILVPQGEGQCPRVSGEGPCPATASGLLQPLRVDTGASSYCLQPPAGSVLSGTWPHPRPGHPPPLMAPWPWGPPASQSSPWPRATALWTSTSDSEPPGSGDLCSEPSTPASPPPPEEGARTGTPAPVSQAEATSTGEPPPGSGGRALPWDPHSLEMVLIGCHGPGSVQWTQEEGTGV.

Over 1–228 (MPAMRGLLAP…HCGALRATWD (228 aa)) the chain is Cytoplasmic. The PAS domain occupies 18–90 (IATRFDGTHS…QQIRKALDEH (73 aa)). Residues 93 to 145 (FKAELILYRKSGLPFWCLLDVIPIKNEKGEVALFLVSHKDISETKNRGGPDNW) form the PAC domain. Over residues 137-150 (KNRGGPDNWKERGG) the composition is skewed to basic and acidic residues. Positions 137–161 (KNRGGPDNWKERGGGRRRYGRAGSK) are disordered. A helical transmembrane segment spans residues 229 to 249 (GFILLATLYVAVTVPYSVCVS). Topologically, residues 250-259 (TAREPSAARG) are extracellular. The helical transmembrane segment at 260–280 (PPSVCDLAVEVLFILDIVLNF) threads the bilayer. The Cytoplasmic portion of the chain corresponds to 281 to 302 (RTTFVSKSGQVVFAPKSICLHY). A helical transmembrane segment spans residues 303–323 (VTTWFLLDVIAALPFDLLHAF). The Extracellular portion of the chain corresponds to 324-331 (KVNVYVGA). The chain crosses the membrane as a helical; Voltage-sensor span at residues 332–352 (HLLKTVRLLRLLRLLPRLDRY). The Cytoplasmic segment spans residues 353–361 (SQYSAVVLT). The chain crosses the membrane as a helical span at residues 362 to 382 (LLMAVFALLAHWVACVWFYIG). Residues 383-456 (QQEIENSESE…GGPSLRSAYI (74 aa)) lie on the Extracellular side of the membrane. The interval 416 to 436 (SPDGGNSSGQSENCSSSGGGS) is disordered. Residues 419–431 (GGNSSGQSENCSS) are compositionally biased toward low complexity. N-linked (GlcNAc...) asparagine glycosylation is found at asparagine 421, asparagine 428, and asparagine 439. The pore-forming intramembrane region spans 457 to 477 (TSLYFALSSLTSVGFGNVSAN). Residues 468-473 (SVGFGN) carry the Selectivity filter motif. The Extracellular segment spans residues 478-482 (TDTEK). Residues 483–503 (IFSICTMLIGALMHAVVFGNV) traverse the membrane as a helical segment. The Cytoplasmic portion of the chain corresponds to 504–1087 (TAIIQRMYAR…QWTQEEGTGV (584 aa)). Residue 585 to 700 (LFEAASRGCL…FAPRFSRGLR (116 aa)) participates in a nucleoside 3',5'-cyclic phosphate binding. 2 disordered regions span residues 733–813 (EKET…LQLP) and 975–1061 (LMAP…PWDP). Positions 776-788 (TAPRPRLGGRGRP) are enriched in basic residues.

This sequence belongs to the potassium channel family. H (Eag) (TC 1.A.1.20) subfamily. Kv12.2/KCNH3 sub-subfamily. In terms of assembly, the potassium channel is probably composed of a homo- or heterotetrameric complex of pore-forming alpha subunits that can associate with modulating beta subunits. Interacts with KCNE1 and KCNE3; these interactions regulate KCNH3 trafficking to the plasma membrane and its subsequent voltage-gated potassium channel activity. Post-translationally, N-glycosylated. N-glycosylation mediates traffick to the cell membrane but is not necessary for voltage-gated potassium channel activity. In terms of tissue distribution, highly expressed in adult and embryonic brain, in particular in cerebellum, brain stem, hippocampus, cortex and striatum. Also found in pituitary.

It is found in the cell membrane. The enzyme catalyses K(+)(in) = K(+)(out). Pore-forming (alpha) subunit of a voltage-gated inwardly rectifying potassium channel. Charactherized by a fast rate of activation during depolarization followed by a rapid inactivation at much more depolarized value causing inward rectification due to a C-type inactivation mechanism. Exhibits a rapid recovery from inactivation. This is Voltage-gated inwardly rectifying potassium channel KCNH3 from Rattus norvegicus (Rat).